The sequence spans 194 residues: SRP-independent targeting protein 3 homolog (194 aa).

Transmembrane regions (helical) follow at residues 43–63 (ILYA…KIII) and 110–130 (LVTI…PPLL).

Belongs to the PHO88 family.

Its subcellular location is the endoplasmic reticulum membrane. Functionally, may function in a SRP (signal recognition particle) and GET (guided entry of tail-anchored proteins) independent pathway for targeting a broad range of substrate proteins to the endoplasmic reticulum. Involved in inorganic phosphate uptake. Also involved in telomere length regulation and maintenance. The sequence is that of SRP-independent targeting protein 3 homolog from Schizosaccharomyces pombe (strain 972 / ATCC 24843) (Fission yeast).